Reading from the N-terminus, the 485-residue chain is Carbohydrate sulfotransferase 7 (485 aa).

At 1-12 (MKGRRRRRREYC) the chain is on the cytoplasmic side. The helical; Signal-anchor for type II membrane protein transmembrane segment at 13 to 33 (KFTLLLALYTLLLLLVPSVLD) threads the bilayer. Topologically, residues 34–485 (SGSEQDKGGR…PLETNANWAT (452 aa)) are lumenal. The interval 66 to 88 (EQGAEVRFQAEGNPDRSPRPQGN) is disordered. N-linked (GlcNAc...) asparagine glycosylation occurs at asparagine 88. Residue 109–115 (WRTGSSF) participates in 3'-phosphoadenylyl sulfate binding. A glycan (N-linked (GlcNAc...) asparagine) is linked at asparagine 185. Residue 277–285 (RDPRAVHNS) participates in 3'-phosphoadenylyl sulfate binding. Asparagine 406 is a glycosylation site (N-linked (GlcNAc...) asparagine). Serine 461 carries the phosphoserine modification. The span at 465–475 (RDVKTVRKGET) shows a compositional bias: basic and acidic residues. Positions 465-485 (RDVKTVRKGETPLETNANWAT) are disordered.

Belongs to the sulfotransferase 1 family. Gal/GlcNAc/GalNAc subfamily.

The protein localises to the golgi apparatus membrane. The enzyme catalyses chondroitin beta-D-glucuronate + n 3'-phosphoadenylyl sulfate = chondroitin 6'-sulfate + n adenosine 3',5'-bisphosphate + n H(+). Its function is as follows. Sulfotransferase that utilizes 3'-phospho-5'-adenylyl sulfate (PAPS) as sulfonate donor to catalyze the transfer of sulfate to position 6 of non-reducing N-acetylglucosamine (GlcNAc) residues. Preferentially acts on mannose-linked GlcNAc. Also able to catalyze the transfer of sulfate to position 6 of the N-acetylgalactosamine (GalNAc) residue of chondroitin. Also acts on core 2 mucin-type oligosaccharide and N-acetyllactosamine oligomer with a lower efficiency. Has weak or no activity toward keratan sulfate and oligosaccharides containing the Galbeta1-4GlcNAc. Catalyzes 6-O-sulfation of beta-benzyl GlcNAc but not alpha- or beta-benzyl GalNAc. The sequence is that of Carbohydrate sulfotransferase 7 (Chst7) from Rattus norvegicus (Rat).